A 417-amino-acid polypeptide reads, in one-letter code: Putative F-box protein At3g58950 (417 aa).

The region spanning 1 to 53 is the F-box domain; sequence MDLFSSLPDEVLCHILSFLTTKEAALASVVSKRWRNQFALVPNLDIDEEGKRE.

The chain is Putative F-box protein At3g58950 from Arabidopsis thaliana (Mouse-ear cress).